The sequence spans 1563 residues: NACHT domain- and WD repeat-containing protein 1 (1563 aa).

The WD 1 repeat unit spans residues 274-314 (TNHQVLEQLRELELARQELGWLYQEIRHHLWQSTESTKVFC). An NACHT domain is found at 336-666 (TPLVLFGPPG…HRQLSQVIQV (331 aa)). 342–349 (GPPGIGKT) is an ATP binding site. WD repeat units follow at residues 866-905 (GCHK…VVHV), 908-947 (GHTA…EKVT), 954-994 (QNPT…LVFC), 998-1037 (DVSD…LQEK), 1044-1082 (KEET…LLEK), 1126-1165 (EHED…TLLN), 1168-1207 (EGVG…KLQS), 1212-1251 (LDRT…EQDC), 1253-1292 (DTSN…DVLC), 1346-1385 (QLPE…FPLE), 1386-1425 (AHGS…GMFE), and 1431-1470 (SCCR…LLAV). The tract at residues 1534 to 1563 (AAEASQDAEPVAVEGKESKSNKRSQVCLIL) is disordered.

May interact with HSP90AA1, HSP90AB1 and BAG2.

The protein localises to the cytoplasm. The protein resides in the cytosol. Functionally, may play a role in the control of androgen receptor (AR) protein steady-state levels. The polypeptide is NACHT domain- and WD repeat-containing protein 1 (Nwd1) (Mus musculus (Mouse)).